The chain runs to 1043 residues: Peroxisomal ATPase PEX1 (1043 aa).

An AAA-cassette D1 region spans residues 453–626 (ATPAIILDGK…SKNQIMKLNR (174 aa)). ATP-binding positions include 461 to 468 (GKQGIGKT) and 738 to 745 (GYPGCGKT). Positions 733 to 926 (GILLYGYPGC…CYNAYLKSVH (194 aa)) are AAA-cassette D2.

The protein belongs to the AAA ATPase family. Interacts with PEX6; forming the PEX1-PEX6 AAA ATPase complex, which is composed of a heterohexamer formed by a trimer of PEX1-PEX6 dimers. The PEX1-PEX6 heterooligomers associate with the peroxisomal importomer via interaction of PEX6 with the peroxisomal membrane anchor PEX15.

It localises to the cytoplasm. The protein resides in the cytosol. The protein localises to the peroxisome membrane. The enzyme catalyses ATP + H2O = ADP + phosphate + H(+). Its function is as follows. Component of the PEX1-PEX6 AAA ATPase complex, a protein dislocase complex that mediates the ATP-dependent extraction of the PEX5 receptor from peroxisomal membranes, an essential step for PEX5 recycling. Specifically recognizes PEX5 monoubiquitinated at 'Cys-6', and pulls it out of the peroxisome lumen through the PEX2-PEX10-PEX12 retrotranslocation channel. Extraction by the PEX1-PEX6 AAA ATPase complex is accompanied by unfolding of the TPR repeats and release of bound cargo from PEX5. The protein is Peroxisomal ATPase PEX1 of Saccharomyces cerevisiae (strain ATCC 204508 / S288c) (Baker's yeast).